The sequence spans 37 residues: Large ribosomal subunit protein bL36 (37 aa).

The protein belongs to the bacterial ribosomal protein bL36 family.

The protein is Large ribosomal subunit protein bL36 (rpmJ) of Mycoplasma sp.